The sequence spans 168 residues: Cilia- and flagella-associated protein 276 (168 aa).

2 disordered regions span residues 35–61 (AHLA…RDTF) and 149–168 (HTAA…FFST). Positions 38–55 (AQQQDPWSRLSSTPTATS) are enriched in polar residues.

Microtubule inner protein component of sperm flagellar doublet microtubules. Predominantly expressed in nervous system tissues, such as the spinal cord, cerebrum, cerebellum, and sciatic nerve.

Its subcellular location is the cytoplasm. It is found in the cytoskeleton. The protein localises to the cilium axoneme. The protein resides in the flagellum axoneme. Microtubule inner protein (MIP) part of the dynein-decorated doublet microtubules (DMTs) in cilia axoneme, which is required for motile cilia beating. May play an important role for the maintenance of myelin-axon integrity. May affect intracellular Ca(2+) homeostasis. This Mus musculus (Mouse) protein is Cilia- and flagella-associated protein 276.